The sequence spans 437 residues: tRNA-queuosine alpha-mannosyltransferase (437 aa).

The protein belongs to the glycosyltransferase group 1 family. Glycosyltransferase 4 subfamily.

It localises to the cytoplasm. Its subcellular location is the nucleus. It carries out the reaction queuosine(34) in tRNA(Asp) + GDP-alpha-D-mannose = O-4''-alpha-D-mannosylqueuosine(34) in tRNA(Asp) + GDP + H(+). Its function is as follows. Glycosyltransferase that specifically catalyzes mannosylation of cytoplasmic tRNA(Asp) modified with queuosine at position 34 (queuosine(34)). Mannosylates the cyclopentene moiety of queuosine(34) in tRNA(Asp) to form mannosyl-queuosine(34). Mannosylation of queuosine(34) in tRNA(Asp) is required to slow-down elongation at cognate codons, GAC and GAU, thereby regulating protein translation. In Xenopus laevis (African clawed frog), this protein is tRNA-queuosine alpha-mannosyltransferase (gtdc1).